The primary structure comprises 787 residues: Transcriptional corepressor LEUNIG_HOMOLOG (787 aa).

The tract at residues 1 to 88 (MAQSNWEADK…IEAQQGKAKE (88 aa)) is required for SEU-binding. The LisH domain maps to 8-40 (ADKMLDVYIYDYLVKKKLHNTAKSFMTEGKVSP). Positions 77–106 (AYIEAQQGKAKEQQMQIQQLQMMRQAQMQR) form a coiled coil. The tract at residues 299-413 (NMTNSPMYGG…TPSTHTPVDG (115 aa)) is disordered. 2 stretches are compositionally biased toward low complexity: residues 336 to 346 (SIGSPMQSSSS) and 355 to 372 (QQSS…QSQQ). Residues 380-409 (PSSSGPANSTGTGNTVGPSNSQPSTPSTHT) are compositionally biased toward polar residues. 7 WD repeats span residues 508-547 (KSAS…VEST), 550-589 (EHAH…YFLR), 593-633 (GHAA…VRAV), 635-671 (GAST…KRVN), 675-715 (GHSS…HELS), 717-755 (SGNK…CMTV), and 757-787 (GHEC…KIWK).

Forms corepressor complexes with SLK1 and SLK2; LUH is the transcription repressor subunit and SLK1 and SLK2 the specific DNA-binding adapters. Interacts with SEU. Binds to YAB3, YAB5 and YAB1/FIL; these complexes promote adaxial cell identity in leaves as well as embryonic shoot apical meristem (SAM) initiation and postembryonic SAM maintenance. Expressed in roots, stems, leaves, seedlings, apex, flowers, siliques, flower organs and seeds (including seed coat).

It localises to the nucleus. In terms of biological role, transcription repressor subunit of the SEU-SLK1 and SEU-SLK2 transcriptional corepressor of abiotic stress (e.g. salt and osmotic stress) response genes, by means of an epigenetic process involving histone modification (e.g. H3K9 and H3K14 acetylation), probably by recruiting HDAC, to facilitate the condensation of chromatin thus preventing transcription at the target genes. Can also act as a transcription activator. Implicated in embryo and floral development. Involved in post-synthesis cell wall modifications necessary for mucilage extrusion from seeds upon imbibition, probably by promoting the expression of genes required for mucilage maturation (e.g. MUM2). Regulates the maintenance on leaf polarity and meristem activity as well as the initiation of embryonic shoot apical meristem (SAM) development. This Arabidopsis thaliana (Mouse-ear cress) protein is Transcriptional corepressor LEUNIG_HOMOLOG.